The following is a 518-amino-acid chain: MKKLKINYLFIGILALLLAVALWPSIPWFGKADNRIAAIQARGELRVSTIHTPLTYNEINGKPFGLDYELAKQFADYLGVKLKVTVRQNISQLFDDLDNGNADLLAAGLVYNSERVKNYQPGPTYYSVSQQLVYKVGQYRPRTLGNLTAEQLTVAPGHVVVNDLQTLKDTKFPELSWKVDDKKGSAELMEDVIEGKLDYTIADSVAISLFQRVHPELAVALDITDEQPVTWFSPLDGDNTLSAALLDFFNEMNEDGTLARIEEKYLGHGDDFDYVDTRTFLRAVDAVLPQLKPLFEKYAEEIDWRLLAAIAYQESHWDAQATSPTGVRGMMMLTKNTAQSLGITDRTDAEQSISGGVRYLQDMMSKVPESVPENERIWFALAAYNMGYAHMLDARALTAKTKGNPDSWADVKQRLPLLSQKPYYSKLTYGYARGHEAYAYVENIRKYQISLVGYLQEKEKQATEAAMQLAQDYPAVSPTELGKEKFPFLSFLSQSSSNYLTHSPSLLFSRKGSEEKQN.

An N-terminal signal peptide occupies residues 1–21 (MKKLKINYLFIGILALLLAVA). Positions 22 to 269 (LWPSIPWFGK…RIEEKYLGHG (248 aa)) are non-LT domain. The interval 270–518 (DDFDYVDTRT…SRKGSEEKQN (249 aa)) is LT domain. Residue Glu-314 is part of the active site.

This sequence in the N-terminal section; belongs to the bacterial solute-binding protein 3 family. The protein in the C-terminal section; belongs to the transglycosylase Slt family.

It localises to the cell outer membrane. It catalyses the reaction Exolytic cleavage of the (1-&gt;4)-beta-glycosidic linkage between N-acetylmuramic acid (MurNAc) and N-acetylglucosamine (GlcNAc) residues in peptidoglycan, from either the reducing or the non-reducing ends of the peptidoglycan chains, with concomitant formation of a 1,6-anhydrobond in the MurNAc residue.. Murein-degrading enzyme that degrades murein glycan strands and insoluble, high-molecular weight murein sacculi, with the concomitant formation of a 1,6-anhydromuramoyl product. Lytic transglycosylases (LTs) play an integral role in the metabolism of the peptidoglycan (PG) sacculus. Their lytic action creates space within the PG sacculus to allow for its expansion as well as for the insertion of various structures such as secretion systems and flagella. This chain is Membrane-bound lytic murein transglycosylase F, found in Escherichia coli O6:K15:H31 (strain 536 / UPEC).